Here is an 881-residue protein sequence, read N- to C-terminus: Alanine--tRNA ligase (881 aa).

Residues His568, His572, Cys670, and His674 each coordinate Zn(2+).

The protein belongs to the class-II aminoacyl-tRNA synthetase family. The cofactor is Zn(2+).

It is found in the cytoplasm. It catalyses the reaction tRNA(Ala) + L-alanine + ATP = L-alanyl-tRNA(Ala) + AMP + diphosphate. Functionally, catalyzes the attachment of alanine to tRNA(Ala) in a two-step reaction: alanine is first activated by ATP to form Ala-AMP and then transferred to the acceptor end of tRNA(Ala). Also edits incorrectly charged Ser-tRNA(Ala) and Gly-tRNA(Ala) via its editing domain. The polypeptide is Alanine--tRNA ligase (Clostridium acetobutylicum (strain ATCC 824 / DSM 792 / JCM 1419 / IAM 19013 / LMG 5710 / NBRC 13948 / NRRL B-527 / VKM B-1787 / 2291 / W)).